The sequence spans 286 residues: Fructose-bisphosphate aldolase (286 aa).

Ser50 provides a ligand contact to D-glyceraldehyde 3-phosphate. Residue Asp85 is the Proton donor of the active site. Residues His86, Asp107, Glu137, and His181 each coordinate Zn(2+). Residue Gly182 coordinates dihydroxyacetone phosphate. Zn(2+) is bound at residue His209. Residues 210–212 (GGT) and 231–234 (NVNT) contribute to the dihydroxyacetone phosphate site.

This sequence belongs to the class II fructose-bisphosphate aldolase family. The cofactor is Zn(2+).

It catalyses the reaction beta-D-fructose 1,6-bisphosphate = D-glyceraldehyde 3-phosphate + dihydroxyacetone phosphate. It functions in the pathway carbohydrate degradation; glycolysis; D-glyceraldehyde 3-phosphate and glycerone phosphate from D-glucose: step 4/4. Functionally, catalyzes the aldol condensation of dihydroxyacetone phosphate (DHAP or glycerone-phosphate) with glyceraldehyde 3-phosphate (G3P) to form fructose 1,6-bisphosphate (FBP) in gluconeogenesis and the reverse reaction in glycolysis. This is Fructose-bisphosphate aldolase (fba) from Staphylococcus aureus (strain MSSA476).